The chain runs to 130 residues: Small ribosomal subunit protein uS9 (130 aa).

It belongs to the universal ribosomal protein uS9 family.

The protein is Small ribosomal subunit protein uS9 of Aeromonas hydrophila subsp. hydrophila (strain ATCC 7966 / DSM 30187 / BCRC 13018 / CCUG 14551 / JCM 1027 / KCTC 2358 / NCIMB 9240 / NCTC 8049).